The following is a 203-amino-acid chain: Large ribosomal subunit protein bL25 (203 aa).

It belongs to the bacterial ribosomal protein bL25 family. CTC subfamily. Part of the 50S ribosomal subunit; part of the 5S rRNA/L5/L18/L25 subcomplex. Contacts the 5S rRNA. Binds to the 5S rRNA independently of L5 and L18.

In terms of biological role, this is one of the proteins that binds to the 5S RNA in the ribosome where it forms part of the central protuberance. In Pseudomonas syringae pv. tomato (strain ATCC BAA-871 / DC3000), this protein is Large ribosomal subunit protein bL25.